The primary structure comprises 89 residues: Small ribosomal subunit protein uS15 (89 aa).

It belongs to the universal ribosomal protein uS15 family. As to quaternary structure, part of the 30S ribosomal subunit. Forms a bridge to the 50S subunit in the 70S ribosome, contacting the 23S rRNA.

One of the primary rRNA binding proteins, it binds directly to 16S rRNA where it helps nucleate assembly of the platform of the 30S subunit by binding and bridging several RNA helices of the 16S rRNA. In terms of biological role, forms an intersubunit bridge (bridge B4) with the 23S rRNA of the 50S subunit in the ribosome. This chain is Small ribosomal subunit protein uS15, found in Pseudomonas fluorescens (strain Pf0-1).